Here is a 783-residue protein sequence, read N- to C-terminus: Polyribonucleotide nucleotidyltransferase 1, mitochondrial (783 aa).

Residues 1 to 45 constitute a mitochondrion transit peptide; the sequence is MAACRYCCSCLRLRPLSDGPFLLPRRDRALTQLQVRALWSSAGSR. N6-acetyllysine is present on residues lysine 250, lysine 264, lysine 285, and lysine 289. An N6-succinyllysine modification is found at lysine 552. Residues 605–664 form the KH domain; that stretch reads PVVETVQVPLSKRAKFVGPGGYNLKKLQAETGVTISQVDEETFSVFAPTPSAMHEARDFI. The region spanning 679–750 is the S1 motif domain; it reads GAVYTATITE…ADGRMRLSRK (72 aa). 2 positions are modified to phosphoserine: serine 754 and serine 782.

It belongs to the polyribonucleotide nucleotidyltransferase family. Homotrimer; in free form. Homooligomer. Component of the mitochondrial degradosome (mtEXO) complex which is a heteropentamer containing 2 copies of SUPV3L1 and 3 copies of PNPT1. As part of the mitochondrial degradosome complex, interacts with GRSF1 in an RNA-dependent manner; the interaction enhances the activity of the complex. Interacts with TCL1A; the interaction has no effect on PNPT1 exonuclease activity.

The protein resides in the cytoplasm. The protein localises to the mitochondrion matrix. It localises to the mitochondrion intermembrane space. The enzyme catalyses RNA(n+1) + phosphate = RNA(n) + a ribonucleoside 5'-diphosphate. Functionally, RNA-binding protein implicated in numerous RNA metabolic processes. Catalyzes the phosphorolysis of single-stranded polyribonucleotides processively in the 3'-to-5' direction. Mitochondrial intermembrane factor with RNA-processing exoribonulease activity. Component of the mitochondrial degradosome (mtEXO) complex, that degrades 3' overhang double-stranded RNA with a 3'-to-5' directionality in an ATP-dependent manner. Involved in the degradation of non-coding mitochondrial transcripts (MT-ncRNA) and tRNA-like molecules. Required for correct processing and polyadenylation of mitochondrial mRNAs. Plays a role as a cytoplasmic RNA import factor that mediates the translocation of small RNA components, like the 5S RNA, the RNA subunit of ribonuclease P and the mitochondrial RNA-processing (MRP) RNA, into the mitochondrial matrix. Plays a role in mitochondrial morphogenesis and respiration; regulates the expression of the electron transport chain (ETC) components at the mRNA and protein levels. In the cytoplasm, shows a 3'-to-5' exoribonuclease mediating mRNA degradation activity; degrades c-myc mRNA upon treatment with IFNB1/IFN-beta, resulting in a growth arrest in melanoma cells. Regulates the stability of specific mature miRNAs in melanoma cells; specifically and selectively degrades miR-221, preferentially. Also plays a role in RNA cell surveillance by cleaning up oxidized RNAs. Binds to the RNA subunit of ribonuclease P, MRP RNA and miR-221 microRNA. This Homo sapiens (Human) protein is Polyribonucleotide nucleotidyltransferase 1, mitochondrial.